The sequence spans 400 residues: Enoyl-[acyl-carrier-protein] reductase [NADH] 2 (400 aa).

NAD(+) contacts are provided by residues 48–53, 75–76, 112–113, and 141–142; these read GASSGF, FE, DA, and LA. Tyr227 is a binding site for substrate. Tyr237 (proton donor) is an active-site residue. Residues Lys246 and 275–277 contribute to the NAD(+) site; that span reads LVT.

It belongs to the TER reductase family. In terms of assembly, monomer.

The enzyme catalyses a 2,3-saturated acyl-[ACP] + NAD(+) = a (2E)-enoyl-[ACP] + NADH + H(+). It participates in lipid metabolism; fatty acid biosynthesis. In terms of biological role, involved in the final reduction of the elongation cycle of fatty acid synthesis (FAS II). Catalyzes the reduction of a carbon-carbon double bond in an enoyl moiety that is covalently linked to an acyl carrier protein (ACP). The polypeptide is Enoyl-[acyl-carrier-protein] reductase [NADH] 2 (Photobacterium profundum (strain SS9)).